The chain runs to 244 residues: MTSQEPEVLFPASAPQVTTDLSNNVVLTTVNDLYNWAKMSSLWPLLYGTACCFIEFAAMLGSRFDFDRFGLLPRSSPRTADLIITAGTVTMKMAPALVKLYQQMAEPKYVIAMGACTISGGMFSSDSYTAVRGVDKLIPVDVYIPGCPPRPEAIMDAIVKLRKKIAAEDMRERGRLQQTHRYYTVKHNLKPVPEIITGKYLESETRQAPPPELAAAIGLPVPPALQTADFKQAEQQLKALRGGM.

[4Fe-4S] cluster is bound by residues Cys-51, Cys-52, Cys-116, and Cys-147.

This sequence belongs to the complex I 20 kDa subunit family. In terms of assembly, NDH-1 can be composed of about 15 different subunits; different subcomplexes with different compositions have been identified which probably have different functions. The cofactor is [4Fe-4S] cluster.

The protein resides in the cellular thylakoid membrane. It catalyses the reaction a plastoquinone + NADH + (n+1) H(+)(in) = a plastoquinol + NAD(+) + n H(+)(out). The enzyme catalyses a plastoquinone + NADPH + (n+1) H(+)(in) = a plastoquinol + NADP(+) + n H(+)(out). Functionally, NDH-1 shuttles electrons from an unknown electron donor, via FMN and iron-sulfur (Fe-S) centers, to quinones in the respiratory and/or the photosynthetic chain. The immediate electron acceptor for the enzyme in this species is believed to be plastoquinone. Couples the redox reaction to proton translocation, and thus conserves the redox energy in a proton gradient. Cyanobacterial NDH-1 also plays a role in inorganic carbon-concentration. The protein is NAD(P)H-quinone oxidoreductase subunit K of Synechococcus sp. (strain JA-3-3Ab) (Cyanobacteria bacterium Yellowstone A-Prime).